We begin with the raw amino-acid sequence, 187 residues long: MATTLTLSEAVTALQQGDVIAYPTEAVWGLGCDPRQETAVHTLLNIKQRASGKGLILVTAELNTLQDWLDLDTLSPERLHEVQASWPGPHTWVLPASTRAPHWITGHHNGLAVRISAHPLVSALCRAWNMALISTSANVAGQPPARRREDLDPSLLPHLAGIVDGPTGGLAQPTSIRDARSGHILRL.

In terms of domain architecture, YrdC-like spans threonine 4–leucine 187.

Belongs to the SUA5 family. TsaC subfamily.

It localises to the cytoplasm. It catalyses the reaction L-threonine + hydrogencarbonate + ATP = L-threonylcarbamoyladenylate + diphosphate + H2O. Required for the formation of a threonylcarbamoyl group on adenosine at position 37 (t(6)A37) in tRNAs that read codons beginning with adenine. Catalyzes the conversion of L-threonine, HCO(3)(-)/CO(2) and ATP to give threonylcarbamoyl-AMP (TC-AMP) as the acyladenylate intermediate, with the release of diphosphate. This chain is Threonylcarbamoyl-AMP synthase, found in Xylella fastidiosa (strain M23).